Here is a 459-residue protein sequence, read N- to C-terminus: MNKPLTPSTYIRNLNVGILRKLSDFIDPQEGWKKLAVAIKKPSGDDRYNQFHIRRFEALLQTGKSPTCELLFDWGTTNCTVGDLVDLLVQIELFAPATLLLPDAVPQTVKSLPPREAATVAQTHGPCQEKDRTSVMPMPKLEHSCEPPDSSSPDNRSVESSDTRFHSFSFHELKSITNNFDEQPASAGGNRMGEGGFGVVYKGCVNNTIVAVKKLGAMVEISTEELKQQFDQEIKVMATCQHENLVELLGFSSDSDNLCLVYAYMPNGSLLDRLSCLDGTPPLSWHTRCKVAQGTANGIRFLHENHHIHRDIKSANILLDKDFTAKISDFGLARASARLAQTVMTSRIVGTTAYMAPEALRGEITPKSDIYSFGVVLLELITGLAAVDENREPQLLLDIKEEIEDEEKTIEDYTDEKMSDADPASVEAMYSAASQCLHEKKNRRPDIAKVQQLLQEMSA.

At Met1 the chain carries N-acetylmethionine. The region spanning 20 to 104 (RKLSDFIDPQ…APATLLLPDA (85 aa)) is the Death domain. N6-acetyllysine is present on Lys34. Residues 115–161 (REAATVAQTHGPCQEKDRTSVMPMPKLEHSCEPPDSSSPDNRSVESS) form a disordered region. Positions 186–454 (SAGGNRMGEG…PDIAKVQQLL (269 aa)) constitute a Protein kinase domain. ATP-binding positions include 192–200 (MGEGGFGVV) and Lys213. The active-site Proton acceptor is Asp311. ATP is bound by residues 313–316 (KSAN) and Asp329. Phosphothreonine is present on residues Thr342 and Thr345. The residue at position 346 (Ser346) is a Phosphoserine.

This sequence belongs to the protein kinase superfamily. TKL Ser/Thr protein kinase family. Pelle subfamily. In terms of assembly, associates with MYD88 and IRAK2 to form a ternary complex called the Myddosome. Once phosphorylated, IRAK4 dissociates from the receptor complex and then associates with the TNF receptor-associated factor 6 (TRAF6), IRAK1, and PELI1; this intermediate complex is required for subsequent NF-kappa-B activation. Direct binding of SMAD6 to PELI1 prevents complex formation and hence negatively regulates IL1R-TLR signaling and eventually NF-kappa-B-mediated gene expression. Interacts with IL1RL1. Interacts (when phosphorylated) with IRAK1. May interact (when phosphorylated) with IRAK3. Requires Mg(2+) as cofactor. In terms of processing, phosphorylated.

The protein resides in the cytoplasm. It carries out the reaction L-seryl-[protein] + ATP = O-phospho-L-seryl-[protein] + ADP + H(+). The catalysed reaction is L-threonyl-[protein] + ATP = O-phospho-L-threonyl-[protein] + ADP + H(+). In terms of biological role, serine/threonine-protein kinase that plays a critical role in initiating innate immune response against foreign pathogens. Involved in Toll-like receptor (TLR) and IL-1R signaling pathways. Is rapidly recruited by MYD88 to the receptor-signaling complex upon TLR activation to form the Myddosome together with IRAK2. Phosphorylates initially IRAK1, thus stimulating the kinase activity and intensive autophosphorylation of IRAK1. Phosphorylates E3 ubiquitin ligases Pellino proteins (PELI1, PELI2 and PELI3) to promote pellino-mediated polyubiquitination of IRAK1. Then, the ubiquitin-binding domain of IKBKG/NEMO binds to polyubiquitinated IRAK1 bringing together the IRAK1-MAP3K7/TAK1-TRAF6 complex and the NEMO-IKKA-IKKB complex. In turn, MAP3K7/TAK1 activates IKKs (CHUK/IKKA and IKBKB/IKKB) leading to NF-kappa-B nuclear translocation and activation. Alternatively, phosphorylates TIRAP to promote its ubiquitination and subsequent degradation. Phosphorylates NCF1 and regulates NADPH oxidase activation after LPS stimulation suggesting a similar mechanism during microbial infections. In Mus musculus (Mouse), this protein is Interleukin-1 receptor-associated kinase 4 (Irak4).